The following is a 1072-amino-acid chain: DNA-directed RNA polymerase subunit beta (1072 aa).

Belongs to the RNA polymerase beta chain family. In terms of assembly, in plastids the minimal PEP RNA polymerase catalytic core is composed of four subunits: alpha, beta, beta', and beta''. When a (nuclear-encoded) sigma factor is associated with the core the holoenzyme is formed, which can initiate transcription.

It is found in the plastid. It localises to the chloroplast. It catalyses the reaction RNA(n) + a ribonucleoside 5'-triphosphate = RNA(n+1) + diphosphate. DNA-dependent RNA polymerase catalyzes the transcription of DNA into RNA using the four ribonucleoside triphosphates as substrates. The polypeptide is DNA-directed RNA polymerase subunit beta (Arabis hirsuta (Hairy rock-cress)).